The primary structure comprises 416 residues: Adenylosuccinate synthetase (416 aa).

Residues 13–19 (GDEGKGK) and 41–43 (GHT) each bind GTP. D14 acts as the Proton acceptor in catalysis. Residues D14 and G41 each coordinate Mg(2+). IMP contacts are provided by residues 14–17 (DEGK), 39–42 (NAGH), T126, R140, Q220, T235, and R299. The active-site Proton donor is the H42. Residue 295-301 (TTTGRPR) participates in substrate binding. GTP is bound by residues R301, 327-329 (KLD), and 405-407 (STS).

The protein belongs to the adenylosuccinate synthetase family. Homodimer. Mg(2+) serves as cofactor.

The protein resides in the cytoplasm. It carries out the reaction IMP + L-aspartate + GTP = N(6)-(1,2-dicarboxyethyl)-AMP + GDP + phosphate + 2 H(+). It functions in the pathway purine metabolism; AMP biosynthesis via de novo pathway; AMP from IMP: step 1/2. Plays an important role in the de novo pathway of purine nucleotide biosynthesis. Catalyzes the first committed step in the biosynthesis of AMP from IMP. In Sulfurovum sp. (strain NBC37-1), this protein is Adenylosuccinate synthetase.